The following is a 337-amino-acid chain: PHD finger protein 11 (337 aa).

The segment at 25–61 (KRTCALCPEGHEWSQIYFSPSGNIVAHENCLLYSSGL) adopts a C2HC pre-PHD-type zinc-finger fold. The segment at 91–143 (LKCSFCNKGGATVGCDLWFCKKSYHYVCAKKDQAILQVDGNHGTYKLFCPEHS) adopts a PHD-type zinc-finger fold. 2 disordered regions span residues 145 to 196 (EQEE…HGHT) and 301 to 337 (GDLD…GDSL). A compositionally biased stretch (basic and acidic residues) spans 187–196 (HMTEEPHGHT). Polar residues-rich tracts occupy residues 301-312 (GDLDCSSSTSGS) and 323-337 (SQES…GDSL).

As to quaternary structure, interacts with BRCA1 and RELA.

It is found in the nucleus. Its function is as follows. Positive regulator of Th1-type cytokine gene expression. This chain is PHD finger protein 11 (Phf11), found in Mus musculus (Mouse).